A 693-amino-acid chain; its full sequence is Elongation factor G (693 aa).

A tr-type G domain is found at 8 to 282 (KNTRNIGIMA…AVIDYLPSPL (275 aa)). GTP contacts are provided by residues 17 to 24 (AHIDAGKT), 81 to 85 (DTPGH), and 135 to 138 (NKMD).

The protein belongs to the TRAFAC class translation factor GTPase superfamily. Classic translation factor GTPase family. EF-G/EF-2 subfamily.

Its subcellular location is the cytoplasm. In terms of biological role, catalyzes the GTP-dependent ribosomal translocation step during translation elongation. During this step, the ribosome changes from the pre-translocational (PRE) to the post-translocational (POST) state as the newly formed A-site-bound peptidyl-tRNA and P-site-bound deacylated tRNA move to the P and E sites, respectively. Catalyzes the coordinated movement of the two tRNA molecules, the mRNA and conformational changes in the ribosome. This Staphylococcus intermedius protein is Elongation factor G.